The primary structure comprises 435 residues: Serine carboxypeptidase-like 12 (435 aa).

The signal sequence occupies residues 1-21 (MKSTPKLLLLLLFIINHHVDS). Cystine bridges form between Cys-80–Cys-323, Cys-244–Cys-258, and Cys-282–Cys-289. N-linked (GlcNAc...) asparagine glycosylation is present at Asn-101. The active site involves Ser-176. 3 N-linked (GlcNAc...) asparagine glycosylation sites follow: Asn-313, Asn-336, and Asn-344. Asp-360 is an active-site residue. Asn-376 carries N-linked (GlcNAc...) asparagine glycosylation. Residue His-413 is part of the active site. An N-linked (GlcNAc...) asparagine glycan is attached at Asn-420.

This sequence belongs to the peptidase S10 family. As to expression, expressed in roots.

It is found in the secreted. Functionally, probable carboxypeptidase. This Arabidopsis thaliana (Mouse-ear cress) protein is Serine carboxypeptidase-like 12 (SCPL12).